The sequence spans 871 residues: Alanine--tRNA ligase (871 aa).

His-590, His-594, Cys-694, and His-698 together coordinate Zn(2+).

The protein belongs to the class-II aminoacyl-tRNA synthetase family. Zn(2+) is required as a cofactor.

It localises to the cytoplasm. The enzyme catalyses tRNA(Ala) + L-alanine + ATP = L-alanyl-tRNA(Ala) + AMP + diphosphate. In terms of biological role, catalyzes the attachment of alanine to tRNA(Ala) in a two-step reaction: alanine is first activated by ATP to form Ala-AMP and then transferred to the acceptor end of tRNA(Ala). Also edits incorrectly charged Ser-tRNA(Ala) and Gly-tRNA(Ala) via its editing domain. This Thermoplasma acidophilum (strain ATCC 25905 / DSM 1728 / JCM 9062 / NBRC 15155 / AMRC-C165) protein is Alanine--tRNA ligase.